Here is a 513-residue protein sequence, read N- to C-terminus: rRNA N(6)-adenosine-methyltransferase ZCCHC4 (513 aa).

Residues cysteine 40, histidine 42, cysteine 64, cysteine 73, cysteine 125, cysteine 128, histidine 140, and histidine 143 each coordinate Zn(2+). The segment at 40–82 (CPHGPTLLFVKVTQGKEETRRFYACSACRDRKDCNFFQWEDEK) adopts a GRF-type zinc-finger fold. S-adenosyl-L-methionine contacts are provided by residues 172 to 175 (QYLF), arginine 202, aspartate 225, 243 to 244 (NM), and aspartate 276. Residues 337–357 (QVDYDNHALYKHGKTGRKQSP) are regulatory loop. Residues cysteine 380, cysteine 383, histidine 393, cysteine 394, cysteine 397, cysteine 400, histidine 410, cysteine 411, cysteine 414, cysteine 417, histidine 424, cysteine 425, cysteine 428, cysteine 431, histidine 436, and cysteine 438 each coordinate Zn(2+). Residues 395 to 447 (ELCNSCTSKDGRKWNHCFLCKKCVKPSWIHCSICNHCAVPDHSCEGPKHGCFI) enclose the DHHC domain. The CCHC-type zinc-finger motif lies at 443-460 (HGCFICGELDHKRSTCPN). The segment covering 466-481 (RANKAVRKQKQRKSNK) has biased composition (basic residues). The tract at residues 466-513 (RANKAVRKQKQRKSNKMKMETTKGQSMNHTSATRRKKRRERAHQYLGS) is disordered. Residues 487-496 (TKGQSMNHTS) show a composition bias toward polar residues. A compositionally biased stretch (basic residues) spans 497-506 (ATRRKKRRER).

It belongs to the ZCCHC4 family. In terms of assembly, interacts with components of the ASC-1 complex TRIP4, ASCC1, ASCC2 and ASCC3. Interact with AHCYL1 and AHCYL2. Interact with YTHDC2.

The protein localises to the nucleus. It localises to the nucleolus. The protein resides in the cytoplasm. The catalysed reaction is adenosine(4220) in 28S rRNA + S-adenosyl-L-methionine = N(6)-methyladenosine(4220) in 28S rRNA + S-adenosyl-L-homocysteine + H(+). RRNA N6-methyltransferase that specifically methylates the adenine in position 4220 of 28S rRNA. N6-methylation of adenine(4220) in 28S rRNA is required for translation. This is rRNA N(6)-adenosine-methyltransferase ZCCHC4 from Homo sapiens (Human).